Here is a 914-residue protein sequence, read N- to C-terminus: Exoglucanase-2 (914 aa).

The N-terminal stretch at 1 to 33 is a signal peptide; sequence MKRRLMKGISLLTLVFLIGIMLQLSLKSELTAY. A CBM3 domain is found at 763 to 914; sequence VEGVLIIQSF…SGNLVYGIEP (152 aa).

This sequence belongs to the glycosyl hydrolase 48 (cellulase L) family.

The enzyme catalyses Hydrolysis of (1-&gt;4)-beta-D-glucosidic linkages in cellulose and cellotetraose, releasing cellobiose from the non-reducing ends of the chains.. The chain is Exoglucanase-2 (celY) from Thermoclostridium stercorarium (strain ATCC 35414 / DSM 8532 / NCIMB 11754) (Clostridium stercorarium).